Consider the following 196-residue polypeptide: DnaA initiator-associating protein DiaA (196 aa).

The 163-residue stretch at 34–196 folds into the SIS domain; it reads VVQSLLNGNK…DNTLFPHQEV (163 aa).

The protein belongs to the SIS family. DiaA subfamily. As to quaternary structure, homotetramer; dimer of dimers.

In terms of biological role, required for the timely initiation of chromosomal replication via direct interactions with the DnaA initiator protein. This is DnaA initiator-associating protein DiaA from Erwinia tasmaniensis (strain DSM 17950 / CFBP 7177 / CIP 109463 / NCPPB 4357 / Et1/99).